The sequence spans 327 residues: tRNA dimethylallyltransferase (327 aa).

An ATP-binding site is contributed by 14–21 (GPTASGKT). 16 to 21 (TASGKT) is a substrate binding site. 2 interaction with substrate tRNA regions span residues 39–42 (DSAL) and 163–167 (QRIQR).

Belongs to the IPP transferase family. As to quaternary structure, monomer. The cofactor is Mg(2+).

It carries out the reaction adenosine(37) in tRNA + dimethylallyl diphosphate = N(6)-dimethylallyladenosine(37) in tRNA + diphosphate. Catalyzes the transfer of a dimethylallyl group onto the adenine at position 37 in tRNAs that read codons beginning with uridine, leading to the formation of N6-(dimethylallyl)adenosine (i(6)A). The sequence is that of tRNA dimethylallyltransferase from Xanthomonas oryzae pv. oryzae (strain KACC10331 / KXO85).